Consider the following 902-residue polypeptide: MRLFVSEGSPGSLPVLAAAARARGRAELLISTVGPEECVVPFLTRPKVPVLQLDSGNYLFSASAICRYFFLLCGWEQDDLTNQWLEWEATELQPVLSAALHCLVVQGKKGEDILGPLRRVLTHIDHSLSRQNCPFLAGDTESLADIVLWGALYPLLQDPAYLPEELGALQSWFQTLSTQEPCQRAAETVLKQQGVLALRLYLQKQPQPQPPPPEGRTVSNELEEEELATLSEEDIVTAVAAWEKGLESLPPLKLQQHPVLPVPGERNVLITSALPYVNNVPHLGNIIGCVLSADVFARYCRLRQWNTLYLCGTDEYGTATETKAMEEGLTPREICDKYHAIHADIYRWFGISFDTFGRTTTPQQTKITQDIFQRLLTRGFVLRDTVEQLRCERCARFLADRFVEGVCPFCGYEEARGDQCDRCGKLINAIELKKPQCKICRSCPVVRSSQHLFLDLPKLEKRLEDWLGKTVPGSDWTPNARFIIRSWLRDGLKPRCITRDLKWGTPVPLEGFEDKVFYVWFDATIGYVSITANYTDQWEKWWKNPEQVDLYQFMAKDNVPFHGLVFPCSVLGAEDNYTLVKHIIATEYLNYEDGKFSKSRGIGVFGDMAKDTGIPADIWRFYLLYIRPEGQDSAFSWTDLLIKNNSELLNNLGNFINRAGMFVSKFFGGCVPEMALTPDDRRLVAHVSWELQHYHQLLEKVRIRDALRSILTISRHGNQYIQVNEPWKRIKGGEMDRQRAGTVTGMAVNMAALLSVMLQPYMPTVSSTIQTQLQLPPAACRILATSFICTLPAGHRIGTVSPLFQKLENDQIENLRQRFGGGQAKGSPKPAAVEAVTAAGSQHIQTLTDEVTKQGNVVRELKAQKADKNQVAAEVAKLLDLKKQLALAEGKPIETPKGKKKK.

Positions 74–212 constitute a GST C-terminal domain; that stretch reads GWEQDDLTNQ…QKQPQPQPPP (139 aa). A 'HIGH' region motif is present at residues 275 to 285; that stretch reads PYVNNVPHLGN. A 'KMSKS' region motif is present at residues 595–599; sequence KFSKS. Lys-598 serves as a coordination point for ATP. A Phosphoserine modification is found at Ser-827. A Phosphothreonine modification is found at Thr-837. The 57-residue stretch at 843–899 folds into the WHEP-TRS domain; that stretch reads HIQTLTDEVTKQGNVVRELKAQKADKNQVAAEVAKLLDLKKQLALAEGKPIETPKGK.

This sequence belongs to the class-I aminoacyl-tRNA synthetase family. In terms of assembly, monomer. Part of a multisubunit complex that groups tRNA ligases for Arg (RARS1), Asp (DARS1), Gln (QARS1), Ile (IARS1), Leu (LARS1), Lys (KARS1), Met (MARS1) the bifunctional ligase for Glu and Pro (EPRS1) and the auxiliary subunits AIMP1/p43, AIMP2/p38 and EEF1E1/p18. Forms a linear complex that contains MARS1, EEF1E1, EPRS1 and AIMP2 that is at the core of the multisubunit complex.

The protein localises to the cytoplasm. It localises to the cytosol. Its subcellular location is the nucleus. It is found in the nucleolus. It carries out the reaction tRNA(Met) + L-methionine + ATP = L-methionyl-tRNA(Met) + AMP + diphosphate. In terms of biological role, catalyzes the specific attachment of an amino acid to its cognate tRNA in a 2 step reaction: the amino acid (AA) is first activated by ATP to form AA-AMP and then transferred to the acceptor end of the tRNA. Plays a role in the synthesis of ribosomal RNA in the nucleolus. The sequence is that of Methionine--tRNA ligase, cytoplasmic (Mars1) from Mus musculus (Mouse).